Reading from the N-terminus, the 214-residue chain is tRNA (guanine-N(7)-)-methyltransferase (214 aa).

S-adenosyl-L-methionine is bound by residues Glu43, Glu68, Asp95, and Asp117. Asp117 is an active-site residue. Substrate contacts are provided by residues Lys121, Asp153, and 190 to 193; that span reads TEYE.

Belongs to the class I-like SAM-binding methyltransferase superfamily. TrmB family.

The catalysed reaction is guanosine(46) in tRNA + S-adenosyl-L-methionine = N(7)-methylguanosine(46) in tRNA + S-adenosyl-L-homocysteine. It participates in tRNA modification; N(7)-methylguanine-tRNA biosynthesis. Catalyzes the formation of N(7)-methylguanine at position 46 (m7G46) in tRNA. This is tRNA (guanine-N(7)-)-methyltransferase from Staphylococcus aureus (strain Mu3 / ATCC 700698).